A 468-amino-acid polypeptide reads, in one-letter code: Putative BTB/POZ domain and WD-repeat protein R154 (468 aa).

Residues 14–85 (SDLQLIVEDS…FYGIDDKLPE (72 aa)) form the BTB domain. 3 WD repeats span residues 194-233 (HHSENITSLCYDNNNKRIIYGDLKGTIYAYDFFSNKIIFN), 354-398 (DEIG…LVKS), and 401-440 (LFDVPIISMTYSPNGDQLIVANCDREVRILNSDNYEIIYT).

It belongs to the mimivirus BTB/WD family.

The polypeptide is Putative BTB/POZ domain and WD-repeat protein R154 (Acanthamoeba polyphaga (Amoeba)).